Reading from the N-terminus, the 295-residue chain is MSWLSKLMPSGIRTENTPAKKRSVPEGLWEKCSNCGSALYGPELEENLEVCPKCDHHMAIRARARLNSLFDPDTATTEIAAQLGPVDALKFKDQKRYGERIKASQKASGEYDALIAMRGTLKGNPLVAAAFDFAFMGGSMGSVVGERFARAAEVALEVGCPFVCFSASGGARMQEGLFSLMQMAKTSAALGRLREAGLPYISVLTHPTTGGVSASFAMLGDINIAEPHALIGFAGPRVIEQTVRETLPEGFQRSEFLLDHGAIDQICDRHQLRDRIAELTAMMMRQPHPQDADAA.

The disordered stretch occupies residues 1–20; that stretch reads MSWLSKLMPSGIRTENTPAK. The region spanning 28–295 is the CoA carboxyltransferase N-terminal domain; the sequence is LWEKCSNCGS…QPHPQDADAA (268 aa). Residues cysteine 32, cysteine 35, cysteine 51, and cysteine 54 each contribute to the Zn(2+) site. The C4-type zinc finger occupies 32 to 54; the sequence is CSNCGSALYGPELEENLEVCPKC.

Belongs to the AccD/PCCB family. Acetyl-CoA carboxylase is a heterohexamer composed of biotin carboxyl carrier protein (AccB), biotin carboxylase (AccC) and two subunits each of ACCase subunit alpha (AccA) and ACCase subunit beta (AccD). It depends on Zn(2+) as a cofactor.

The protein resides in the cytoplasm. It carries out the reaction N(6)-carboxybiotinyl-L-lysyl-[protein] + acetyl-CoA = N(6)-biotinyl-L-lysyl-[protein] + malonyl-CoA. It participates in lipid metabolism; malonyl-CoA biosynthesis; malonyl-CoA from acetyl-CoA: step 1/1. Component of the acetyl coenzyme A carboxylase (ACC) complex. Biotin carboxylase (BC) catalyzes the carboxylation of biotin on its carrier protein (BCCP) and then the CO(2) group is transferred by the transcarboxylase to acetyl-CoA to form malonyl-CoA. This chain is Acetyl-coenzyme A carboxylase carboxyl transferase subunit beta, found in Xanthomonas euvesicatoria pv. vesicatoria (strain 85-10) (Xanthomonas campestris pv. vesicatoria).